Consider the following 264-residue polypeptide: Glutamate racemase (264 aa).

Residues 10 to 11 and 42 to 43 contribute to the substrate site; these read DS and YG. The Proton donor/acceptor role is filled by Cys73. 74 to 75 serves as a coordination point for substrate; the sequence is NT. Cys183 (proton donor/acceptor) is an active-site residue. Residue 184–185 coordinates substrate; that stretch reads TH.

The protein belongs to the aspartate/glutamate racemases family.

The enzyme catalyses L-glutamate = D-glutamate. It functions in the pathway cell wall biogenesis; peptidoglycan biosynthesis. In terms of biological role, provides the (R)-glutamate required for cell wall biosynthesis. In Streptococcus uberis (strain ATCC BAA-854 / 0140J), this protein is Glutamate racemase.